Here is a 653-residue protein sequence, read N- to C-terminus: 4-alpha-glucanotransferase (653 aa).

The active-site Nucleophile is the Glu123. Asp214 (proton donor) is an active-site residue.

This sequence belongs to the glycosyl hydrolase 57 family.

The catalysed reaction is Transfers a segment of a (1-&gt;4)-alpha-D-glucan to a new position in an acceptor, which may be glucose or a (1-&gt;4)-alpha-D-glucan.. The sequence is that of 4-alpha-glucanotransferase from Thermococcus kodakarensis (strain ATCC BAA-918 / JCM 12380 / KOD1) (Pyrococcus kodakaraensis (strain KOD1)).